Reading from the N-terminus, the 67-residue chain is Large ribosomal subunit protein uL29 (67 aa).

It belongs to the universal ribosomal protein uL29 family.

The chain is Large ribosomal subunit protein uL29 from Cereibacter sphaeroides (strain ATCC 17025 / ATH 2.4.3) (Rhodobacter sphaeroides).